Reading from the N-terminus, the 462-residue chain is NADH-quinone oxidoreductase subunit N 1 (462 aa).

15 helical membrane-spanning segments follow: residues Phe4 to Leu24, Ala32 to Ala52, Ile60 to Ala80, Phe88 to Ala108, Trp113 to Ala133, Phe148 to Ala168, Leu178 to Phe198, Val220 to Cys240, Leu251 to Val271, Leu279 to Asn299, Leu307 to Leu327, Ala351 to Val371, Phe374 to Ile394, Leu416 to Val436, and Ala439 to Phe459.

The protein belongs to the complex I subunit 2 family. NDH-1 is composed of 14 different subunits. Subunits NuoA, H, J, K, L, M, N constitute the membrane sector of the complex.

The protein localises to the cell inner membrane. It catalyses the reaction a quinone + NADH + 5 H(+)(in) = a quinol + NAD(+) + 4 H(+)(out). NDH-1 shuttles electrons from NADH, via FMN and iron-sulfur (Fe-S) centers, to quinones in the respiratory chain. The immediate electron acceptor for the enzyme in this species is believed to be ubiquinone. Couples the redox reaction to proton translocation (for every two electrons transferred, four hydrogen ions are translocated across the cytoplasmic membrane), and thus conserves the redox energy in a proton gradient. The chain is NADH-quinone oxidoreductase subunit N 1 from Solidesulfovibrio magneticus (strain ATCC 700980 / DSM 13731 / RS-1) (Desulfovibrio magneticus).